A 147-amino-acid polypeptide reads, in one-letter code: Large ribosomal subunit protein uL13 (147 aa).

The protein belongs to the universal ribosomal protein uL13 family. Part of the 50S ribosomal subunit.

Its function is as follows. This protein is one of the early assembly proteins of the 50S ribosomal subunit, although it is not seen to bind rRNA by itself. It is important during the early stages of 50S assembly. This chain is Large ribosomal subunit protein uL13, found in Corynebacterium glutamicum (strain R).